Reading from the N-terminus, the 365-residue chain is Chorismate synthase (365 aa).

Arg-46 is a binding site for NADP(+). Residues 124 to 126 (RAS), Gly-284, 299 to 303 (KPTPS), and Arg-326 contribute to the FMN site.

Belongs to the chorismate synthase family. It depends on FMNH2 as a cofactor.

The enzyme catalyses 5-O-(1-carboxyvinyl)-3-phosphoshikimate = chorismate + phosphate. The protein operates within metabolic intermediate biosynthesis; chorismate biosynthesis; chorismate from D-erythrose 4-phosphate and phosphoenolpyruvate: step 7/7. Its function is as follows. Catalyzes the anti-1,4-elimination of the C-3 phosphate and the C-6 proR hydrogen from 5-enolpyruvylshikimate-3-phosphate (EPSP) to yield chorismate, which is the branch point compound that serves as the starting substrate for the three terminal pathways of aromatic amino acid biosynthesis. This reaction introduces a second double bond into the aromatic ring system. This is Chorismate synthase from Pyrobaculum islandicum (strain DSM 4184 / JCM 9189 / GEO3).